We begin with the raw amino-acid sequence, 368 residues long: MKNVGFIGWRGMVGSVLMQRMVEERDFDAIRPVFFSTSQFGQAAPTFGDTSTGTLQDAFDLDALKALDIIVTCQGGDYTNEIYPKLRESGWQGYWIDAASTLRMKDDAIIILDPVNQDVITDGLNNGVKTFVGGNCTVSLMLMSLGGLFAHNLVDWVSVATYQAASGGGARHMRELLTQMGQLYGHVADELATPSSAILDIERKVTALTRSGELPVDNFGVPLAGSLIPWIDKQLDNGQSREEWKGQAETNKILNTASVIPVDGLCVRVGALRCHSQAFTIKLKKEVSIPTVEELLAAHNPWAKVVPNDRDITMRELTPAAVTGTLTTPVGRLRKLNMGPEFLSAFTVGDQLLWGAAEPLRRMLRQLA.

NADP(+)-binding positions include 10 to 13, 37 to 38, and Gln-74; these read RGMV and TS. Residue Arg-103 coordinates phosphate. Cys-136 serves as the catalytic Acyl-thioester intermediate. At Cys-136 the chain carries S-cysteinyl cysteine; in inhibited form. Gln-163 serves as a coordination point for substrate. NADP(+) contacts are provided by residues 166–167 and Pro-194; that span reads SG. Glu-242 contributes to the substrate binding site. Lys-245 serves as a coordination point for phosphate. Substrate is bound at residue Arg-268. His-275 serves as the catalytic Proton acceptor. Position 351 (Gln-351) interacts with NADP(+).

Belongs to the aspartate-semialdehyde dehydrogenase family. In terms of assembly, homodimer.

It carries out the reaction L-aspartate 4-semialdehyde + phosphate + NADP(+) = 4-phospho-L-aspartate + NADPH + H(+). It participates in amino-acid biosynthesis; L-lysine biosynthesis via DAP pathway; (S)-tetrahydrodipicolinate from L-aspartate: step 2/4. Its pathway is amino-acid biosynthesis; L-methionine biosynthesis via de novo pathway; L-homoserine from L-aspartate: step 2/3. The protein operates within amino-acid biosynthesis; L-threonine biosynthesis; L-threonine from L-aspartate: step 2/5. In terms of biological role, catalyzes the NADPH-dependent formation of L-aspartate-semialdehyde (L-ASA) by the reductive dephosphorylation of L-aspartyl-4-phosphate. In Salmonella typhi, this protein is Aspartate-semialdehyde dehydrogenase.